The following is a 62-amino-acid chain: Photosystem II reaction center protein Z (62 aa).

A run of 2 helical transmembrane segments spans residues 8-28 (LVVALIVYSFVLIVAVPITLS) and 41-61 (VTASIGWVGMVLLTGVLNSFV).

It belongs to the PsbZ family. PSII is composed of 1 copy each of membrane proteins PsbA, PsbB, PsbC, PsbD, PsbE, PsbF, PsbH, PsbI, PsbJ, PsbK, PsbL, PsbM, PsbT, PsbX, PsbY, PsbZ, Psb30/Ycf12, at least 3 peripheral proteins of the oxygen-evolving complex and a large number of cofactors. It forms dimeric complexes.

Its subcellular location is the plastid. The protein localises to the chloroplast thylakoid membrane. In terms of biological role, may control the interaction of photosystem II (PSII) cores with the light-harvesting antenna, regulates electron flow through the 2 photosystem reaction centers. PSII is a light-driven water plastoquinone oxidoreductase, using light energy to abstract electrons from H(2)O, generating a proton gradient subsequently used for ATP formation. In Cyanidioschyzon merolae (strain NIES-3377 / 10D) (Unicellular red alga), this protein is Photosystem II reaction center protein Z.